Reading from the N-terminus, the 87-residue chain is Small ribosomal subunit protein bS20 (87 aa).

It belongs to the bacterial ribosomal protein bS20 family.

Its function is as follows. Binds directly to 16S ribosomal RNA. The chain is Small ribosomal subunit protein bS20 from Halothermothrix orenii (strain H 168 / OCM 544 / DSM 9562).